We begin with the raw amino-acid sequence, 431 residues long: Adenylosuccinate synthetase (431 aa).

GTP-binding positions include 15–21 (GDEGKGK) and 43–45 (GHT). Asp-16 (proton acceptor) is an active-site residue. Mg(2+) is bound by residues Asp-16 and Gly-43. Residues 16-19 (DEGK), 41-44 (NAGH), Thr-135, Arg-149, Asn-227, Thr-242, and Arg-306 each bind IMP. His-44 serves as the catalytic Proton donor. 302–308 (VTTGRKR) serves as a coordination point for substrate. GTP contacts are provided by residues Arg-308, 334–336 (KLD), and 416–418 (GVG).

This sequence belongs to the adenylosuccinate synthetase family. Homodimer. The cofactor is Mg(2+).

The protein localises to the cytoplasm. The enzyme catalyses IMP + L-aspartate + GTP = N(6)-(1,2-dicarboxyethyl)-AMP + GDP + phosphate + 2 H(+). Its pathway is purine metabolism; AMP biosynthesis via de novo pathway; AMP from IMP: step 1/2. Plays an important role in the de novo pathway and in the salvage pathway of purine nucleotide biosynthesis. Catalyzes the first committed step in the biosynthesis of AMP from IMP. This is Adenylosuccinate synthetase from Monosiga brevicollis (Choanoflagellate).